Consider the following 552-residue polypeptide: MFS-type transporter atr4 (552 aa).

The tract at residues 1–102 (MEDPKSLSAP…NIVDWDGPND (102 aa)) is disordered. Positions 16 to 27 (ADTTTADETPAA) are enriched in low complexity. Polar residues-rich tracts occupy residues 38–47 (KAGSESSENT) and 71–80 (LRNSSVSRSN). An N-linked (GlcNAc...) asparagine glycan is attached at N73. The next 6 membrane-spanning stretches (helical) occupy residues 118–138 (IFLV…LATG), 153–173 (LGSL…LVIA), 182–202 (MPLY…CALG), 214–234 (LQGC…SDLI), 244–264 (GIYA…GGFL), and 272–292 (WLMW…FVVM). N-linked (GlcNAc...) asparagine glycosylation is present at N314. A run of 6 helical transmembrane segments spans residues 346-366 (PIIF…YLLF), 385-405 (GLVY…FGVF), 425-445 (LLPM…YGWS), 452-472 (WIVP…TLVC), 498-518 (VVGA…GIGW), and 521-541 (SLLA…YVYG).

It belongs to the major facilitator superfamily.

The protein resides in the cell membrane. Its function is as follows. MFS-type transporter; part of the gene cluster that mediates the biosynthesis of atranorin, a depside of polyketide origin that accumulates in the cortical or medullary layers of lichen thalli. In Stereocaulon alpinum (Alpine snow lichen), this protein is MFS-type transporter atr4.